A 175-amino-acid chain; its full sequence is Development-specific protein S homolog (175 aa).

2 Beta/gamma crystallin 'Greek key' domains span residues 2 to 46 and 48 to 86; these read ANIT…KVPP and VKAILYKNDDFTGDQIEVVANAEELGPLNNNVSSIKVMS. Positions 87–90 are connecting peptide; the sequence is VPVQ. Beta/gamma crystallin 'Greek key' domains follow at residues 91–135 and 136–175; these read PRAR…KPEG and LKVVLFKNDNFSAGDTLSVTSNAPSLGAMNNNTSSIRITP.

Belongs to the beta/gamma-crystallin family.

The protein localises to the spore. The protein resides in the perispore. The polypeptide is Development-specific protein S homolog (ops) (Myxococcus xanthus).